A 349-amino-acid polypeptide reads, in one-letter code: Anthranilate phosphoribosyltransferase (349 aa).

5-phospho-alpha-D-ribose 1-diphosphate is bound by residues glycine 82, 85-86, 92-95, 110-118, and serine 122; these read GD, NVST, and KHGNRAVSG. Glycine 82 contacts anthranilate. Serine 94 is a binding site for Mg(2+). Residue asparagine 113 participates in anthranilate binding. Residue arginine 168 participates in anthranilate binding. Positions 227 and 228 each coordinate Mg(2+).

The protein belongs to the anthranilate phosphoribosyltransferase family. In terms of assembly, homodimer. Requires Mg(2+) as cofactor.

The enzyme catalyses N-(5-phospho-beta-D-ribosyl)anthranilate + diphosphate = 5-phospho-alpha-D-ribose 1-diphosphate + anthranilate. Its pathway is amino-acid biosynthesis; L-tryptophan biosynthesis; L-tryptophan from chorismate: step 2/5. Functionally, catalyzes the transfer of the phosphoribosyl group of 5-phosphorylribose-1-pyrophosphate (PRPP) to anthranilate to yield N-(5'-phosphoribosyl)-anthranilate (PRA). The protein is Anthranilate phosphoribosyltransferase of Pseudomonas fluorescens (strain ATCC BAA-477 / NRRL B-23932 / Pf-5).